We begin with the raw amino-acid sequence, 125 residues long: C-X-C motif chemokine 9 (125 aa).

Residues 1–22 (MKKSGVLFLLGIILLVLIGVQG) form the signal peptide. Disulfide bonds link C31/C58 and C33/C74. The disordered stretch occupies residues 93–125 (VSQKKKQKNGKKHQKKKVLKVRKSQRSRQKKTT). Residues 94 to 125 (SQKKKQKNGKKHQKKKVLKVRKSQRSRQKKTT) show a composition bias toward basic residues.

Belongs to the intercrine alpha (chemokine CxC) family.

It is found in the secreted. Its function is as follows. Cytokine that affects the growth, movement, or activation state of cells that participate in immune and inflammatory response. Chemotactic for activated T-cells. Binds to CXCR3. This chain is C-X-C motif chemokine 9 (CXCL9), found in Homo sapiens (Human).